The following is a 171-amino-acid chain: MSTEQELQIGKVVKSHGIRGEVVVELSTDDPDIRFAIGEVLNGKQAGKEHSLTIDAARMHQGRLLVKFAEVPDRTAADSLRGTRFFAAPLEDEDDEDGFYDHELESLRVIHEGEDIGEVTGVMHGPAGEILEVRLTSGKETLIPFVHAIVPEVDLEEGTATITPPEGLLDL.

The PRC barrel domain occupies 96–168; it reads EDGFYDHELE…TATITPPEGL (73 aa).

This sequence belongs to the RimM family. As to quaternary structure, binds ribosomal protein uS19.

It is found in the cytoplasm. Its function is as follows. An accessory protein needed during the final step in the assembly of 30S ribosomal subunit, possibly for assembly of the head region. Essential for efficient processing of 16S rRNA. May be needed both before and after RbfA during the maturation of 16S rRNA. It has affinity for free ribosomal 30S subunits but not for 70S ribosomes. This chain is Ribosome maturation factor RimM, found in Corynebacterium glutamicum (strain R).